A 159-amino-acid polypeptide reads, in one-letter code: Ribosomal RNA large subunit methyltransferase H (159 aa).

S-adenosyl-L-methionine is bound by residues L76, G107, and 126 to 131 (LSKLTM).

It belongs to the RNA methyltransferase RlmH family. Homodimer.

It is found in the cytoplasm. It carries out the reaction pseudouridine(1915) in 23S rRNA + S-adenosyl-L-methionine = N(3)-methylpseudouridine(1915) in 23S rRNA + S-adenosyl-L-homocysteine + H(+). Functionally, specifically methylates the pseudouridine at position 1915 (m3Psi1915) in 23S rRNA. The polypeptide is Ribosomal RNA large subunit methyltransferase H (Acinetobacter baylyi (strain ATCC 33305 / BD413 / ADP1)).